The following is a 151-amino-acid chain: MTNYTAINYLLYLLSKRDYSEQDLRRKLVQKEYSQEEIEQAIERAQANNWQSDERYCAGFIRYRSQQGIGPRRLKQELKLKGIKDWLINQELENAEIDWFILAEQVFEKKRPQVWDIKAKQKMWRFMLSRGFYNDHFSHLMDIDYNDTEYE.

The protein belongs to the RecX family.

It is found in the cytoplasm. Its function is as follows. Modulates RecA activity. In Actinobacillus pleuropneumoniae serotype 5b (strain L20), this protein is Regulatory protein RecX.